Reading from the N-terminus, the 691-residue chain is Choline transporter-like 1 (691 aa).

Basic and acidic residues predominate over residues 1-10; sequence MGCAESKDGE. The disordered stretch occupies residues 1–20; it reads MGCAESKDGEGEAQNNRPKY. 3 consecutive transmembrane segments (helical) span residues 28 to 48, 205 to 225, and 232 to 252; these read WLAI…FSFV, WHII…LVTM, and IVSW…TVAL. The N-linked (GlcNAc...) asparagine glycan is linked to asparagine 261. Helical transmembrane passes span 282-302 and 332-352; these read VLTL…VIYF and LLAF…IICL. An N-linked (GlcNAc...) asparagine glycan is attached at asparagine 385. Helical transmembrane passes span 408-428, 527-547, 562-582, and 591-611; these read SMFW…FACQ, VVAI…NAMA, FILF…GIVL, and FYMA…HIIL.

Belongs to the CTL (choline transporter-like) family.

It is found in the membrane. This chain is Choline transporter-like 1, found in Drosophila melanogaster (Fruit fly).